The primary structure comprises 82 residues: Ice-structuring protein A (82 aa).

Residues 1-23 form the signal peptide; that stretch reads MALSLFTVGQLIFLFWTMRITEA. A propeptide spans 24–44 (removed by a dipeptidylpeptidase); sequence SPDPAAKAAPAAAAAPAAAAP. Arginine amide is present on Arg-81.

This sequence belongs to the type-I AFP family. Detected in liver and in blood serum (at protein level).

The protein resides in the secreted. Contributes to protect fish blood from freezing at subzero sea water temperatures. Lowers the blood freezing point. Binds to nascent ice crystals and prevents further growth. This is Ice-structuring protein A from Pseudopleuronectes americanus (Winter flounder).